Consider the following 521-residue polypeptide: Tubulin-specific chaperone E (521 aa).

The CAP-Gly domain maps to 24–68; sequence GPVPPTAGVWLGVEWDHPERGKHDGSHDGVRYFTCRHPTGGSFVR. 7 LRR repeats span residues 147–168, 173–194, 199–220, 224–245, 247–268, 271–292, and 301–322; these read FVQS…AAIT, SLQE…SSLS, HLRV…HCAP, QVEE…EHVL, ALTV…EISH, RLER…DVPA, and ALKE…NELE. One can recognise an LRRCT domain in the interval 335-377; it reads NPLLHKEKNLETARQIMIARLGQLELLDMRQILSDERRGAELD.

Belongs to the TBCE family. In terms of assembly, supercomplex made of cofactors A to E. Cofactors A and D function by capturing and stabilizing tubulin in a quasi-native conformation. Cofactor E binds to the cofactor D-tubulin complex; interaction with cofactor C then causes the release of tubulin polypeptides that are committed to the native state.

It is found in the cytoplasm. Its subcellular location is the cytoskeleton. Its function is as follows. Tubulin-folding protein; involved in the second step of the tubulin folding pathway. The polypeptide is Tubulin-specific chaperone E (tbce) (Danio rerio (Zebrafish)).